The following is a 794-amino-acid chain: Furin (794 aa).

The first 26 residues, 1–26, serve as a signal peptide directing secretion; it reads MELRPWLLWVVAATGTLVLLAADAQG. A propeptide spans 27-107 (inhibition peptide); it reads QKVFTNTWAV…QQVAKRRTKR (81 aa). Residues 108–715 are Lumenal-facing; that stretch reads DVYQEPTDPK…AGLLPSHLPE (608 aa). Asp115 contributes to the Ca(2+) binding site. Residues 121–435 enclose the Peptidase S8 domain; sequence QWYLSGVTQR…YGLLDAGAMV (315 aa). The Charge relay system role is filled by Asp153. Asp154 is a binding site for substrate. The Ca(2+) site is built by Asp162, Asp174, Asp179, and Asp181. The interval 162–183 is disordered; sequence DLAGNYDPGASFDVNDQDPDPQ. Substrate is bound at residue 191-192; the sequence is DN. The Charge relay system role is filled by His194. Ca(2+) contacts are provided by Val205, Asn208, Val210, and Gly212. Cystine bridges form between Cys211–Cys360 and Cys303–Cys333. Residues Glu236, 253-258, Asp264, and 292-295 contribute to the substrate site; these read SWGPED and ASGN. Asp258 contributes to the Ca(2+) binding site. Asp301 contributes to the Ca(2+) binding site. 2 residues coordinate substrate: Asp306 and Tyr308. Glu331 provides a ligand contact to Ca(2+). The active-site Charge relay system is the Ser368. Residue Ser368 participates in substrate binding. Asn387 and Asn440 each carry an N-linked (GlcNAc...) asparagine glycan. The 133-residue stretch at 444–576 folds into the P/Homo B domain; that stretch reads VAPQRKCIID…TLVLYGTAPE (133 aa). Cys450 and Cys474 are oxidised to a cystine. Positions 498–500 match the Cell attachment site motif; it reads RGD. An N-linked (GlcNAc...) asparagine glycan is attached at Asn553. FU repeat units follow at residues 577-620 and 638-681; these read GLPV…GFAP and ASVC…QSQS. A disordered region spans residues 673–696; sequence QTCSRQSQSSRESPPQQQPPRLPP. Over residues 676–687 the composition is skewed to low complexity; the sequence is SRQSQSSRESPP. The chain crosses the membrane as a helical span at residues 716-738; the sequence is VVAGLSCAFIVLVFVTVFLVLQL. The Cytoplasmic segment spans residues 739–794; it reads RSGFSFRGVKVYTMDRGLISYKGLPPEAWQEECPSDSEEDEGRGERTAFIKDQSAL. A cell surface signal region spans residues 759-762; that stretch reads YKGL. Residues 767–780 are compositionally biased toward acidic residues; that stretch reads WQEECPSDSEEDEG. A disordered region spans residues 767-794; the sequence is WQEECPSDSEEDEGRGERTAFIKDQSAL. A phosphoserine; by CK2 mark is found at Ser773 and Ser775. The short motif at 773–779 is the Trans Golgi network signal element; the sequence is SDSEEDE.

Belongs to the peptidase S8 family. Furin subfamily. Interacts with FLNA. Binds to PACS1 which mediates TGN localization and connection to clathrin adapters. Interacts with LAMP1, LAMP2 and LAMP3. Requires Ca(2+) as cofactor. Post-translationally, the inhibition peptide, which plays the role of an intramolecular chaperone, is autocatalytically removed in the endoplasmic reticulum (ER) and remains non-covalently bound to furin as a potent autoinhibitor. Following transport to the trans Golgi, a second cleavage within the inhibition propeptide results in propeptide dissociation and furin activation. Phosphorylation is required for TGN localization of the endoprotease. In vivo, exists as di-, mono- and non-phosphorylated forms. As to expression, seems to be expressed ubiquitously.

It localises to the golgi apparatus. Its subcellular location is the trans-Golgi network membrane. The protein resides in the cell membrane. It is found in the secreted. The protein localises to the endosome membrane. It catalyses the reaction Release of mature proteins from their proproteins by cleavage of -Arg-Xaa-Yaa-Arg-|-Zaa- bonds, where Xaa can be any amino acid and Yaa is Arg or Lys. Releases albumin, complement component C3 and von Willebrand factor from their respective precursors.. With respect to regulation, inhibited by the not secondly cleaved propeptide. Inhibited by m-guanidinomethyl-phenylacetyl-Arg-Val-Arg-(amidomethyl)-benzamidine (m-guanidinomethyl-Phac-RVR-Amb) and 4-guanidinomethyl-phenylacetyl-Arg-Tle-Arg-4-amidinobenzylamide (MI-1148). Inhibited by Decanoyl-Arg-Val-Lys-Arg-chloromethylketone (decanoyl-RVKR-CMK). Inhibited by heparin/heparan sulfate-binding. Ubiquitous endoprotease within constitutive secretory pathways capable of cleavage at the RX(K/R)R consensus motif. Mediates processing of TGFB1, an essential step in TGF-beta-1 activation. Converts through proteolytic cleavage the non-functional Brain natriuretic factor prohormone into its active hormone BNP(1-32). By mediating processing of accessory subunit ATP6AP1/Ac45 of the V-ATPase, regulates the acidification of dense-core secretory granules in islets of Langerhans cells. Its function is as follows. (Microbial infection) Cleaves and activates diphtheria toxin DT. Functionally, (Microbial infection) Cleaves and activates anthrax toxin protective antigen (PA). In terms of biological role, (Microbial infection) Cleaves and activates HIV-1 virus Envelope glycoprotein gp160. (Microbial infection) Required for H7N1 and H5N1 influenza virus infection probably by cleaving hemagglutinin. Its function is as follows. (Microbial infection) Able to cleave S.pneumoniae serine-rich repeat protein PsrP. Functionally, (Microbial infection) Facilitates human coronaviruses EMC and SARS-CoV-2 infections by proteolytically cleaving the spike protein at the monobasic S1/S2 cleavage site. This cleavage is essential for spike protein-mediated cell-cell fusion and entry into human lung cells. In terms of biological role, (Microbial infection) Facilitates mumps virus infection by proteolytically cleaving the viral fusion protein F. This chain is Furin, found in Homo sapiens (Human).